Reading from the N-terminus, the 173-residue chain is Ribosome maturation factor RimM (173 aa).

Residues Glu-90–Ile-169 form the PRC barrel domain.

This sequence belongs to the RimM family. In terms of assembly, binds ribosomal protein uS19.

It is found in the cytoplasm. Its function is as follows. An accessory protein needed during the final step in the assembly of 30S ribosomal subunit, possibly for assembly of the head region. Essential for efficient processing of 16S rRNA. May be needed both before and after RbfA during the maturation of 16S rRNA. It has affinity for free ribosomal 30S subunits but not for 70S ribosomes. This Nitratiruptor sp. (strain SB155-2) protein is Ribosome maturation factor RimM.